Consider the following 148-residue polypeptide: uncharacterized protein (148 aa).

A compositionally biased stretch (low complexity) spans 1–17 (MCPPVRQRPAQAPPAKR). 2 disordered regions span residues 1–86 (MCPP…VQSP) and 122–148 (RAHRLPQPKPPCLSRQRPSPDSQTSPC). Over residues 38-57 (RPPKMQRRPRPPVAKRRRFP) the composition is skewed to basic residues. Positions 137–148 (QRPSPDSQTSPC) are enriched in polar residues.

The protein belongs to the Epstein-Barr virus BLLF2 family.

This is an uncharacterized protein from Epstein-Barr virus (strain AG876) (HHV-4).